Here is a 1216-residue protein sequence, read N- to C-terminus: MPWLSGGRRRRRGQPREAPREPPPSAQPQREPPPAPPAAVPTPPAPSAPPPRARESAELPLPAGWEEARDYDGRVFYIDHNTRQTSWIDPRDRITKPLTFADCVGDELPLGWETVYDKQIGVYYMDHINKLTQIEDPREQWRREQERMLKEYLIVAQEALNAKKEIYQIKQQRFELAQEEYQQLHKMCEDDSRSYASSFSGYSTNTKYDPHQIKAEIASRRDRLSRLKRELTQMKQELQYKEKGVETLQEIDRKMSSTHTSYKLDEAQAIMSELRTIKKAICTGEKERRDLMHSLAKLTDSFKNSCSVTDSLVDFPHHVGVPGDAGVPQQFCDAGSQTDIIGEFVFDDKTRLVDRVRLNWQYEEARKRVANIQQQLARLDNESWPSTAEADRDRLQLIKEKEALLQELQLIIAQRRSAGDVARLEEERERLEEELRRARATSAQGATERILLQEKRNCLLMQLEEATRLTSYLQSQLKSLCASTLTVSSGSSRGSLASSRGSLASSRGSLSSVSFTDIYGLPQYEKPDAEGSQLLRFDLIPFDSLGRDAPFSEPPGPSGFHKQRRSLDTPQSLASLSSRSSLSSLSPPSSPLDTPFLPASRDSPLAQLADSCEGPGLGALDRLRAHASAMGDEDLPGMAALQPHGVPGDGEGPHERGPPPASAPVGGTVTLREDSAKRLERRARRISACLSDYSLASDSGVFEPLTKRNEDAEEPAYGDTASNGDPQIHVGLLRDSGSECLLVHVLQLKNPAGLAVKEDCKVHIRVYLPPLDSGTPNTYCSKALEFQVPLVFNEVFRIPVHSSALTLKSLQLYVCSVTPQLQEELLGIAQINLADYDSLSEMQLRWHSVQVFTSSEPSRTREAGCAGESSARDPAHTISISGKTDAVTVLLARTTAQLQAVERELAEERAKLEYTEEEVLEMERKEEQAEAISERSWQADSVDSGCSNCTQTSPPYPEPCCMGIDSILGHPFAAQAGPYSPEKFQPSPLKVDKETNTEDLFLEEAASLVKERPSRRARGSPFVRSGTIVRSQTFSPGARSQYVCRLYRSDSDSSTLPRKSPFVRNTLERRTLRYKQSCRSSLAELMARTSLDLELDLQASRTRQRQLNEELCALRELRQRLEDAQLRGQTDLPPWVLRDERLRGLLREAERQTRQTKLDYRHEQAAEKMLKKASKEIYQLRGQSHKEPIQVQTFREKIAFFTRPRINIPPLPADDV.

A disordered region spans residues 1–63; that stretch reads MPWLSGGRRR…RESAELPLPA (63 aa). The segment covering 21–51 has biased composition (pro residues); sequence EPPPSAQPQREPPPAPPAAVPTPPAPSAPPP. 2 consecutive WW domains span residues 59–92 and 106–139; these read LPLPAGWEEARDYDGRVFYIDHNTRQTSWIDPRD and DELPLGWETVYDKQIGVYYMDHINKLTQIEDPRE. Coiled coils occupy residues 164–250 and 354–468; these read KEIY…TLQE and DRVR…EATR. 3 disordered regions span residues 487–508, 546–612, and 634–668; these read VSSGSSRGSLASSRGSLASSRG, GRDA…ADSC, and DLPGMAALQPHGVPGDGEGPHERGPPPASAPVGGT. The segment covering 570–598 has biased composition (low complexity); that stretch reads PQSLASLSSRSSLSSLSPPSSPLDTPFLP. The 126-residue stretch at 722–847 folds into the C2 domain; the sequence is SNGDPQIHVG…SLSEMQLRWH (126 aa). Residues 885 to 936 adopt a coiled-coil conformation; sequence DAVTVLLARTTAQLQAVERELAEERAKLEYTEEEVLEMERKEEQAEAISERS. Residues 1060 to 1079 are interaction with PRKCZ; sequence SPFVRNTLERRTLRYKQSCR. Residues 1091-1160 adopt a coiled-coil conformation; it reads LDLELDLQAS…RQTRQTKLDY (70 aa).

It belongs to the WWC family. Forms homodimers and heterodimers with WWC1 and WWC2. Interacts with DLC1 and PRKCZ. Interacts (via WW domains) with LATS1 and LATS2.

Its subcellular location is the cytoplasm. It is found in the cytosol. Regulator of the Hippo signaling pathway, also known as the Salvador-Warts-Hippo (SWH) pathway. Enhances phosphorylation of LATS1 and YAP1 and negatively regulates cell proliferation and organ growth due to a suppression of the transcriptional activity of YAP1, the major effector of the Hippo pathway. In Homo sapiens (Human), this protein is Protein WWC3.